We begin with the raw amino-acid sequence, 288 residues long: MNNLSFSELCCLFCCPPCPGKIASKLAFLPPDPTYTLICDESGSRWTLHLSERADWQYSSREKDAIECFMTRTSRGNRIACMFVRCCPSAKYTLLFSHGNAVDLGQMSSFYIGLGSRINCNIFSYDYSGYGSSSGKPSEKNLYADIDAAWIALRTRYGIRPEHVIIYGQSIGTVPSVDLAARYESAAVILHSPLTSGMRVAFPDTKKTYCFDAFPNIDKISKITSPVLIIHGTEDEVIDFSHGLALFERCQRPVEPLWVEGAGHNDVELYGQYLERLKQFVAQELVNL.

Residues S170, D235, and H264 each act as charge relay system in the active site.

This sequence belongs to the AB hydrolase superfamily. ABHD17 family. Palmitoylated on cysteine residues located in a cysteine cluster at the N-terminus which promotes membrane localization.

It localises to the cell membrane. It is found in the recycling endosome membrane. The protein resides in the cell projection. The protein localises to the dendritic spine. Its subcellular location is the postsynaptic density membrane. It carries out the reaction S-hexadecanoyl-L-cysteinyl-[protein] + H2O = L-cysteinyl-[protein] + hexadecanoate + H(+). Functionally, hydrolyzes fatty acids from S-acylated cysteine residues in proteins. Has depalmitoylating activity towards nras. The sequence is that of Alpha/beta hydrolase domain-containing protein 17B from Xenopus laevis (African clawed frog).